A 1467-amino-acid chain; its full sequence is Helicase ARIP4 (1467 aa).

Disordered stretches follow at residues 1–150 (MSDE…YAAP) and 186–234 (DSSS…GGTH). The segment covering 11 to 49 (PDLDPDVELEDAEEEEEEEEVAVEECDRDDEEDLLDDPS) has biased composition (acidic residues). Low complexity predominate over residues 72–82 (TSTTSSQSEPS). Residues 100–115 (KKRAQKPSHMRRNIRK) show a composition bias toward basic residues. Glycyl lysine isopeptide (Lys-Gly) (interchain with G-Cter in SUMO2) cross-links involve residues Lys115 and Lys127. 2 stretches are compositionally biased toward basic and acidic residues: residues 133–147 (ELER…RKDY) and 192–201 (EDEKSSRDEV). Lys272 is covalently cross-linked (Glycyl lysine isopeptide (Lys-Gly) (interchain with G-Cter in SUMO2)). The region spanning 292–512 (RFKTSSGFGC…WCMVDFVRPD (221 aa)) is the Helicase ATP-binding domain. 305–312 (HSMGLGKT) provides a ligand contact to ATP. Residues 463–466 (DEGH) carry the DEAH box motif. Residues 551-555 (LHSLL) carry the LXXLL motif 1 motif. The tract at residues 649–673 (GSAGTSARCPPQGTKGKGEDSTLAS) is disordered. Glycyl lysine isopeptide (Lys-Gly) (interchain with G-Cter in SUMO2) cross-links involve residues Lys665, Lys682, Lys759, Lys901, Lys1014, and Lys1018. A Helicase C-terminal domain is found at 728-896 (HLIEESVKLG…RVVDDLNPML (169 aa)). The segment at 1120–1171 (RATGKPKVPEDGRMAASGSQGPSCESTSNGRHSASSPKAPDPEGLARPVSPD) is disordered. Residues 1136 to 1155 (SGSQGPSCESTSNGRHSASS) show a composition bias toward polar residues. A phosphoserine mark is found at Ser1169 and Ser1172. Disordered stretches follow at residues 1184 to 1221 (DVAA…TALG) and 1247 to 1284 (PVLD…VQPY). Thr1260 bears the Phosphothreonine mark. Positions 1329–1333 (LSNLL) match the LXXLL motif 2 motif. The segment at 1445–1467 (AEVGFSSNDDEDKDDDVIEVTGK) is disordered. The span at 1452-1467 (NDDEDKDDDVIEVTGK) shows a compositional bias: acidic residues.

The protein belongs to the SNF2/RAD54 helicase family. Interacts with AR via its N-terminus. Interacts with DYRK1A. Binds DNA and mononucleosomes, but does not seem to form large multiprotein complexes. Sumoylated.

The protein localises to the nucleus. The catalysed reaction is ATP + H2O = ADP + phosphate + H(+). Enzyme activity is enhanced by dsDNA (double-stranded DNA) and ssDNA (single-stranded DNA). In terms of biological role, DNA helicase that modulates androgen receptor (AR)-dependent transactivation in a promoter-dependent manner. Not able to remodel mononucleosomes in vitro. In Homo sapiens (Human), this protein is Helicase ARIP4 (RAD54L2).